A 510-amino-acid chain; its full sequence is Sphingolipid C9-methyltransferase B (510 aa).

A glycan (N-linked (GlcNAc...) asparagine) is linked at N55. The next 2 helical transmembrane spans lie at 62 to 82 (LLGG…GGGA) and 84 to 104 (TFVF…WTYA). N-linked (GlcNAc...) asparagine glycosylation occurs at N175. S-adenosyl-L-methionine contacts are provided by residues 227-228 (YT), 264-272 (MLDIGCGWG), 290-295 (TIAENQ), and 320-321 (YR). A glycan (N-linked (GlcNAc...) asparagine) is linked at N294.

The protein belongs to the CFA/CMAS family.

The protein resides in the membrane. The enzyme catalyses a (4E,8E)-4-sphinga-4,8-dienine ceramide + S-adenosyl-L-methionine = a 9-methyl-(4E,8E)-sphinga-4,8-dienine ceramide + S-adenosyl-L-homocysteine + H(+). It participates in lipid metabolism; sphingolipid metabolism. Its function is as follows. Catalyzes methylation of the sphingoid base component of glucosylceramides (GluCers) at the C9-position. Sphingolipid C9-methylation requires 4,8-desaturated ceramides as substrates. Glucosylceramides play important roles in growth, differentiation and pathogenicity. The methyl group at the C9-position distinguishes fungal glucosylceramides from those of plants and animals and may thus play a role in host-pathogen interactions enabling the host to recognize the fungal attack and initiate specific defense responses. In Emericella nidulans (strain FGSC A4 / ATCC 38163 / CBS 112.46 / NRRL 194 / M139) (Aspergillus nidulans), this protein is Sphingolipid C9-methyltransferase B.